The primary structure comprises 314 residues: Ribosomal RNA small subunit methyltransferase A (314 aa).

S-adenosyl-L-methionine-binding residues include Asn-29, Val-31, Gly-56, Glu-77, Asp-107, and Asn-126. Positions 291-314 are disordered; it reads PKADDAGDDADAQAKADGAQVSTL. Positions 303-314 are enriched in low complexity; the sequence is QAKADGAQVSTL.

Belongs to the class I-like SAM-binding methyltransferase superfamily. rRNA adenine N(6)-methyltransferase family. RsmA subfamily.

It localises to the cytoplasm. It carries out the reaction adenosine(1518)/adenosine(1519) in 16S rRNA + 4 S-adenosyl-L-methionine = N(6)-dimethyladenosine(1518)/N(6)-dimethyladenosine(1519) in 16S rRNA + 4 S-adenosyl-L-homocysteine + 4 H(+). Its function is as follows. Specifically dimethylates two adjacent adenosines (A1518 and A1519) in the loop of a conserved hairpin near the 3'-end of 16S rRNA in the 30S particle. May play a critical role in biogenesis of 30S subunits. The polypeptide is Ribosomal RNA small subunit methyltransferase A (Mycolicibacterium gilvum (strain PYR-GCK) (Mycobacterium gilvum (strain PYR-GCK))).